Here is a 476-residue protein sequence, read N- to C-terminus: Eukaryotic translation initiation factor 3 subunit L (476 aa).

The region spanning 257-452 (DAIRMFSHIL…DLDYALENDL (196 aa)) is the PCI domain.

It belongs to the eIF-3 subunit L family. In terms of assembly, component of the eukaryotic translation initiation factor 3 (eIF-3) complex.

The protein resides in the cytoplasm. Functionally, component of the eukaryotic translation initiation factor 3 (eIF-3) complex, which is involved in protein synthesis of a specialized repertoire of mRNAs and, together with other initiation factors, stimulates binding of mRNA and methionyl-tRNAi to the 40S ribosome. The eIF-3 complex specifically targets and initiates translation of a subset of mRNAs involved in cell proliferation. This is Eukaryotic translation initiation factor 3 subunit L from Aspergillus clavatus (strain ATCC 1007 / CBS 513.65 / DSM 816 / NCTC 3887 / NRRL 1 / QM 1276 / 107).